Reading from the N-terminus, the 350-residue chain is Phenylalanine--tRNA ligase alpha subunit (350 aa).

Position 271 (Glu271) interacts with Mg(2+).

This sequence belongs to the class-II aminoacyl-tRNA synthetase family. Phe-tRNA synthetase alpha subunit type 1 subfamily. Tetramer of two alpha and two beta subunits. Mg(2+) serves as cofactor.

It is found in the cytoplasm. The enzyme catalyses tRNA(Phe) + L-phenylalanine + ATP = L-phenylalanyl-tRNA(Phe) + AMP + diphosphate + H(+). This is Phenylalanine--tRNA ligase alpha subunit from Verminephrobacter eiseniae (strain EF01-2).